The primary structure comprises 295 residues: GTPase Era (295 aa).

The 170-residue stretch at 7–176 (KTVSVCIIGR…ITSKAKIAPW (170 aa)) folds into the Era-type G domain. A G1 region spans residues 15-22 (GRPNSGKS). 15–22 (GRPNSGKS) is a GTP binding site. A G2 region spans residues 41–45 (QTTRS). The segment at 62–65 (DTPG) is G3. GTP is bound by residues 62 to 66 (DTPGI) and 124 to 127 (NKIE). Residues 124–127 (NKIE) are G4. The interval 152–154 (ISA) is G5. The region spanning 204 to 281 (LQQELPYKLT…HLFLFVKVRE (78 aa)) is the KH type-2 domain.

The protein belongs to the TRAFAC class TrmE-Era-EngA-EngB-Septin-like GTPase superfamily. Era GTPase family. As to quaternary structure, monomer.

The protein localises to the cytoplasm. It is found in the cell inner membrane. Its function is as follows. An essential GTPase that binds both GDP and GTP, with rapid nucleotide exchange. Plays a role in 16S rRNA processing and 30S ribosomal subunit biogenesis and possibly also in cell cycle regulation and energy metabolism. The sequence is that of GTPase Era from Rickettsia canadensis (strain McKiel).